The sequence spans 298 residues: Ribosomal RNA small subunit methyltransferase H (298 aa).

S-adenosyl-L-methionine is bound by residues 37-39, D57, L91, D105, and Q112; that span reads GGH.

Belongs to the methyltransferase superfamily. RsmH family.

Its subcellular location is the cytoplasm. It catalyses the reaction cytidine(1402) in 16S rRNA + S-adenosyl-L-methionine = N(4)-methylcytidine(1402) in 16S rRNA + S-adenosyl-L-homocysteine + H(+). Specifically methylates the N4 position of cytidine in position 1402 (C1402) of 16S rRNA. The sequence is that of Ribosomal RNA small subunit methyltransferase H from Kosmotoga olearia (strain ATCC BAA-1733 / DSM 21960 / TBF 19.5.1).